We begin with the raw amino-acid sequence, 459 residues long: Sorting nexin-8 (459 aa).

Positions 1 to 53 (MTGGAMDPLPTAPGAAAAEAEVDEEADPPAADSPVPPVSEPRAPDAGQMQVPP) are disordered. The PX domain occupies 68–176 (ARDAVQVELV…KLFLSFSGPD (109 aa)). Residues Arg-104, Lys-130, and Arg-143 each contribute to the a 1,2-diacyl-sn-glycero-3-phospho-(1D-myo-inositol-3-phosphate) site.

This sequence belongs to the sorting nexin family.

It localises to the early endosome membrane. In terms of biological role, may be involved in several stages of intracellular trafficking. May play a role in intracellular protein transport from early endosomes to the trans-Golgi network. This Bos taurus (Bovine) protein is Sorting nexin-8 (SNX8).